Reading from the N-terminus, the 257-residue chain is Hydroxyethylthiazole kinase (257 aa).

Met42 provides a ligand contact to substrate. Positions 117 and 163 each coordinate ATP. Ala190 is a substrate binding site.

Belongs to the Thz kinase family. Mg(2+) is required as a cofactor.

The enzyme catalyses 5-(2-hydroxyethyl)-4-methylthiazole + ATP = 4-methyl-5-(2-phosphooxyethyl)-thiazole + ADP + H(+). Its pathway is cofactor biosynthesis; thiamine diphosphate biosynthesis; 4-methyl-5-(2-phosphoethyl)-thiazole from 5-(2-hydroxyethyl)-4-methylthiazole: step 1/1. In terms of biological role, catalyzes the phosphorylation of the hydroxyl group of 4-methyl-5-beta-hydroxyethylthiazole (THZ). In Roseobacter denitrificans (strain ATCC 33942 / OCh 114) (Erythrobacter sp. (strain OCh 114)), this protein is Hydroxyethylthiazole kinase.